The following is a 473-amino-acid chain: Dol-P-Glc:Glc(2)Man(9)GlcNAc(2)-PP-Dol alpha-1,2-glucosyltransferase (473 aa).

Topologically, residues 1-6 (MAQLEG) are cytoplasmic. A helical membrane pass occupies residues 7-27 (YCFSAALSCTFLVSCLLFSAF). The Extracellular segment spans residues 28-64 (SRALREPYMDEIFHLPQAQRYCEGHFSLSQWDPMITT). The helical transmembrane segment at 65-85 (LPGLYLVSVGVVKPAIWIFAW) threads the bilayer. Topologically, residues 86-97 (SEHVVCSIGMLR) are cytoplasmic. Residues 98 to 118 (FVNLLFSVGNFYLLYLLFHKV) traverse the membrane as a helical segment. Over 119 to 126 (QPRNKAAS) the chain is Extracellular. Residues 127 to 147 (SIQRVLSTLTLAVFPTLYFFN) form a helical membrane-spanning segment. Over 148–150 (FLY) the chain is Cytoplasmic. The helical transmembrane segment at 151-171 (YTEAGSMFFTLFAYLMCLYGN) threads the bilayer. The Extracellular segment spans residues 172–175 (HKTS). The helical transmembrane segment at 176–196 (AFLGFCGFMFRQTNIIWAVFC) threads the bilayer. At 197–256 (AGNVIAQKLTEAWKTELQKKEDRLPPIKGPFAEFRKILQFLLAYSMSFKNLSMLFCLTWP) the chain is on the cytoplasmic side. Residues 257–277 (YILLGFLFCAFVVVNGGIVIG) traverse the membrane as a helical segment. The Extracellular portion of the chain corresponds to 278-283 (DRSSHE). Residues 284-304 (ACLHFPQLFYFFSFTLFFSFP) traverse the membrane as a helical segment. The Cytoplasmic segment spans residues 305–317 (HLLSPSKIKTFLS). A helical membrane pass occupies residues 318–338 (LVWKHGILFLVVTLVSVFLVW). Topologically, residues 339–365 (KFTYAHKYLLADNRHYTFYVWKRVFQR) are extracellular. Residues 366-386 (YAILKYLLVPAYIFAGWSIAD) traverse the membrane as a helical segment. Topologically, residues 387 to 392 (SLKSKP) are cytoplasmic. Residues 393–413 (IFWNLMFFICLFIVIVPQKLL) traverse the membrane as a helical segment. The Extracellular segment spans residues 414–436 (EFRYFILPYVIYRLNITLPPTSR). A helical membrane pass occupies residues 437-457 (LVCELSCYAIVNFITFYIFLN). Over 458 to 473 (KTFQWPNSQDIQRFMW) the chain is Cytoplasmic.

It belongs to the ALG10 glucosyltransferase family. Interacts with KCNH1; may regulate KCNH1, possibly by regulating its N-glycosylation. Interacts with KCNH2; may reduce KCNH2 sensitivity to classic proarrhythmic drug blockade, possibly by regulating its N-glycosylation. In terms of tissue distribution, highly expressed in heart, placenta, liver, kidney and pancreas. Weakly expressed in lung, skeletal muscle and brain.

The protein resides in the endoplasmic reticulum membrane. The enzyme catalyses an alpha-D-Glc-(1-&gt;3)-alpha-D-Glc-(1-&gt;3)-alpha-D-Man-(1-&gt;2)-alpha-D-Man-(1-&gt;2)-alpha-D-Man-(1-&gt;3)-[alpha-D-Man-(1-&gt;2)-alpha-D-Man-(1-&gt;3)-[alpha-D-Man-(1-&gt;2)-alpha-D-Man-(1-&gt;6)]-alpha-D-Man-(1-&gt;6)]-beta-D-Man-(1-&gt;4)-beta-D-GlcNAc-(1-&gt;4)-alpha-D-GlcNAc-diphospho-di-trans,poly-cis-dolichol + a di-trans,poly-cis-dolichyl beta-D-glucosyl phosphate = a alpha-D-Glc-(1-&gt;2)-alpha-D-Glc-(1-&gt;3)-alpha-D-Glc-(1-&gt;3)-alpha-D-Man-(1-&gt;2)-alpha-D-Man-(1-&gt;2)-alpha-D-Man-(1-&gt;3)-[alpha-D-Man-(1-&gt;2)-alpha-D-Man-(1-&gt;3)-[alpha-D-Man-(1-&gt;2)-alpha-D-Man-(1-&gt;6)]-alpha-D-Man-(1-&gt;6)]-beta-D-Man-(1-&gt;4)-beta-D-GlcNAc-(1-&gt;4)-alpha-D-GlcNAc-diphospho-di-trans,poly-cis-dolichol + a di-trans,poly-cis-dolichyl phosphate + H(+). Its pathway is protein modification; protein glycosylation. Its function is as follows. Dol-P-Glc:Glc(2)Man(9)GlcNAc(2)-PP-Dol alpha-1,2-glucosyltransferase that operates in the biosynthetic pathway of dolichol-linked oligosaccharides, the glycan precursors employed in protein asparagine (N)-glycosylation. The assembly of dolichol-linked oligosaccharides begins on the cytosolic side of the endoplasmic reticulum membrane and finishes in its lumen. The sequential addition of sugars to dolichol pyrophosphate produces dolichol-linked oligosaccharides containing fourteen sugars, including two GlcNAcs, nine mannoses and three glucoses. Once assembled, the oligosaccharide is transferred from the lipid to nascent proteins by oligosaccharyltransferases. In the lumen of the endoplasmic reticulum, adds the third and last glucose residue from dolichyl phosphate glucose (Dol-P-Glc) onto the lipid-linked oligosaccharide intermediate Glc(2)Man(9)GlcNAc(2)-PP-Dol to produce Glc(3)Man(9)GlcNAc(2)-PP-Dol. The protein is Dol-P-Glc:Glc(2)Man(9)GlcNAc(2)-PP-Dol alpha-1,2-glucosyltransferase of Homo sapiens (Human).